A 334-amino-acid chain; its full sequence is tRNA dimethylallyltransferase (334 aa).

23 to 30 serves as a coordination point for ATP; sequence GPTGAGKT. 25-30 is a substrate binding site; the sequence is TGAGKT. 2 interaction with substrate tRNA regions span residues 53 to 56 and 177 to 181; these read DSAL and QRVQR.

Belongs to the IPP transferase family. Monomer. It depends on Mg(2+) as a cofactor.

The catalysed reaction is adenosine(37) in tRNA + dimethylallyl diphosphate = N(6)-dimethylallyladenosine(37) in tRNA + diphosphate. Its function is as follows. Catalyzes the transfer of a dimethylallyl group onto the adenine at position 37 in tRNAs that read codons beginning with uridine, leading to the formation of N6-(dimethylallyl)adenosine (i(6)A). This chain is tRNA dimethylallyltransferase, found in Polynucleobacter necessarius subsp. necessarius (strain STIR1).